The primary structure comprises 117 residues: Large ribosomal subunit protein bL20 (117 aa).

Belongs to the bacterial ribosomal protein bL20 family.

Functionally, binds directly to 23S ribosomal RNA and is necessary for the in vitro assembly process of the 50S ribosomal subunit. It is not involved in the protein synthesizing functions of that subunit. The sequence is that of Large ribosomal subunit protein bL20 from Maridesulfovibrio salexigens (strain ATCC 14822 / DSM 2638 / NCIMB 8403 / VKM B-1763) (Desulfovibrio salexigens).